The primary structure comprises 76 residues: UPF0291 protein BC_1827 (76 aa).

It belongs to the UPF0291 family.

The protein resides in the cytoplasm. The polypeptide is UPF0291 protein BC_1827 (Bacillus cereus (strain ATCC 14579 / DSM 31 / CCUG 7414 / JCM 2152 / NBRC 15305 / NCIMB 9373 / NCTC 2599 / NRRL B-3711)).